A 130-amino-acid polypeptide reads, in one-letter code: Small ribosomal subunit protein uS11 (130 aa).

It belongs to the universal ribosomal protein uS11 family. In terms of assembly, part of the 30S ribosomal subunit. Interacts with proteins S7 and S18. Binds to IF-3.

Located on the platform of the 30S subunit, it bridges several disparate RNA helices of the 16S rRNA. Forms part of the Shine-Dalgarno cleft in the 70S ribosome. The sequence is that of Small ribosomal subunit protein uS11 from Gluconacetobacter diazotrophicus (strain ATCC 49037 / DSM 5601 / CCUG 37298 / CIP 103539 / LMG 7603 / PAl5).